Here is a 232-residue protein sequence, read N- to C-terminus: Enolase-phosphatase E1 (232 aa).

Belongs to the HAD-like hydrolase superfamily. MasA/MtnC family. Monomer. It depends on Mg(2+) as a cofactor.

It carries out the reaction 5-methylsulfanyl-2,3-dioxopentyl phosphate + H2O = 1,2-dihydroxy-5-(methylsulfanyl)pent-1-en-3-one + phosphate. The protein operates within amino-acid biosynthesis; L-methionine biosynthesis via salvage pathway; L-methionine from S-methyl-5-thio-alpha-D-ribose 1-phosphate: step 3/6. It functions in the pathway amino-acid biosynthesis; L-methionine biosynthesis via salvage pathway; L-methionine from S-methyl-5-thio-alpha-D-ribose 1-phosphate: step 4/6. Functionally, bifunctional enzyme that catalyzes the enolization of 2,3-diketo-5-methylthiopentyl-1-phosphate (DK-MTP-1-P) into the intermediate 2-hydroxy-3-keto-5-methylthiopentenyl-1-phosphate (HK-MTPenyl-1-P), which is then dephosphorylated to form the acireductone 1,2-dihydroxy-3-keto-5-methylthiopentene (DHK-MTPene). The chain is Enolase-phosphatase E1 from Xanthomonas euvesicatoria pv. vesicatoria (strain 85-10) (Xanthomonas campestris pv. vesicatoria).